The sequence spans 127 residues: Chorismate mutase AroH (127 aa).

Residues 3–121 (IRGIRGATTV…VVVLRPDLSL (119 aa)) form the Chorismate mutase aroH-type domain. Residues R7, 74–78 (TCMQE), R90, and Y108 each bind prephenate.

Homotrimer.

It localises to the cytoplasm. It carries out the reaction chorismate = prephenate. It participates in metabolic intermediate biosynthesis; prephenate biosynthesis; prephenate from chorismate: step 1/1. In terms of biological role, catalyzes the Claisen rearrangement of chorismate to prephenate. Probably involved in the aromatic amino acid biosynthesis. The sequence is that of Chorismate mutase AroH from Bacillus subtilis (strain 168).